The sequence spans 34 residues: Dermaseptin-S2 (34 aa).

Belongs to the frog skin active peptide (FSAP) family. Dermaseptin subfamily. As to expression, expressed by the skin glands.

It localises to the secreted. In terms of biological role, potent antimicrobial peptide with activity against bacteria and protozoa. Also has activity against fungi. Probably acts by disturbing membrane functions with its amphipathic structure. The protein is Dermaseptin-S2 of Phyllomedusa sauvagei (Sauvage's leaf frog).